We begin with the raw amino-acid sequence, 2253 residues long: Polycystin family receptor for egg jelly (2253 aa).

An N-terminal signal peptide occupies residues 1–19 (MRPGPALLLLGVGLSLSVG). At 20–1184 (RLPLPPVPRG…NIIKSLHQNP (1165 aa)) the chain is on the extracellular side. Positions 154 to 169 (RPASPAARVSPRSAAP) are enriched in low complexity. Residues 154–177 (RPASPAARVSPRSAAPGPRPQQGF) are disordered. N-linked (GlcNAc...) asparagine glycans are attached at residues N197, N242, N295, N306, N345, N349, N481, N674, N849, N890, N923, N939, N958, and N965. Residues 215-913 (CVIQRVRINT…STMFCDFTND (699 aa)) enclose the REJ domain. Residues 1185 to 1205 (VTLFTVLFIILLYVGLAFWAL) form a helical membrane-spanning segment. At 1206–1389 (YRDEMDQHLR…VAKTFNRLQR (184 aa)) the chain is on the cytoplasmic side. The region spanning 1230–1347 (LCYLVTIFTG…TLDRTFHVTH (118 aa)) is the PLAT domain. Residues 1390-1410 (LSCCLAMLLSSLLCNIMFFNL) form a helical membrane-spanning segment. Over 1411-1427 (NRQEQTESRERKYMRSM) the chain is Extracellular. A helical transmembrane segment spans residues 1428-1448 (MIGIESVLITIPVQLLITFLF). The Cytoplasmic segment spans residues 1449 to 1576 (TCSQRKPQAD…KPRIVLPWWC (128 aa)). Residues 1494–1562 (PREVAKPASK…EQHPSQKDLQ (69 aa)) are disordered. Positions 1517–1527 (SKPKHRHRKAQ) are enriched in basic residues. Positions 1549–1558 (DVHSEQHPSQ) are enriched in basic and acidic residues. The helical transmembrane segment at 1577-1597 (VYVAWFLVFATSSISSFFIVF) threads the bilayer. Residues 1598–1607 (YGLTYGYDKS) lie on the Extracellular side of the membrane. A helical membrane pass occupies residues 1608–1628 (IEWLFASFCSFCQSVLLVQPS). Residues 1629-1708 (KIILLSGFRT…RKKRIKRRAL (80 aa)) are Cytoplasmic-facing. The helical transmembrane segment at 1709–1729 (LFLSYILTHFIFLALLLILIV) threads the bilayer. Residues 1730-1966 (LLRHTDCFYY…FDRKASAEIY (237 aa)) are Extracellular-facing. N-linked (GlcNAc...) asparagine glycosylation is found at N1836, N1893, and N1944. Residues 1967–1987 (LYVAILIFFLAYVVDEGCIIM) traverse the membrane as a helical segment. Residues 1988–1996 (QERASYVRS) are Cytoplasmic-facing. Residues 1997 to 2017 (VYNLLNFALKCIFTVLIVLFL) form a helical membrane-spanning segment. Topologically, residues 2018–2042 (RKHFLATGIIRFYLSNPEDFIPFHA) are extracellular. Residues 2043–2063 (VSQVDHIMRIILGFLLFLTIL) traverse the membrane as a helical segment. The Cytoplasmic segment spans residues 2064 to 2091 (KTLRYSRFFYDVRLAQRAIQAALPGICH). A helical transmembrane segment spans residues 2092–2112 (MAFVVSVYFFVYMAFGYLVFG). Residues 2113 to 2145 (QHEWNYSNLIHSTQTVFSYCVSAFQNTEFSNNR) lie on the Extracellular side of the membrane. The chain crosses the membrane as a helical span at residues 2146 to 2166 (ILGVLFLSSFMLVMICVLINL). The Cytoplasmic segment spans residues 2167-2253 (FQAVILSAYE…NGKKMVYLVV (87 aa)).

This sequence belongs to the polycystin family. As to expression, exclusively expressed in testis.

The protein resides in the cell membrane. It is found in the cytoplasmic vesicle. Its subcellular location is the secretory vesicle. It localises to the acrosome membrane. The protein localises to the nucleus. Its function is as follows. Testis-specific protein that controls sperm transport and the timing of zona pellucida-evoked exocytosis of the sperm acrosome. The chain is Polycystin family receptor for egg jelly from Homo sapiens (Human).